Reading from the N-terminus, the 770-residue chain is Pheromone-regulated membrane protein 10 (770 aa).

Disordered stretches follow at residues 1–125 (MDGR…DGDD) and 139–169 (NQGG…RNEE). 2 stretches are compositionally biased toward polar residues: residues 49–63 (SGKS…NNDN) and 78–93 (DLSS…SKGT). Basic and acidic residues predominate over residues 155 to 169 (ENGKDDIEKNNRNEE). A run of 10 helical transmembrane segments spans residues 453 to 473 (WMCV…AFGG), 475 to 495 (WVNL…QFIL), 505 to 525 (VFEI…GSIP), 529 to 549 (ICFG…YIIL), 568 to 588 (FYAI…SALF), 604 to 624 (LISP…ISLL), 629 to 649 (ISQL…TYWA), 659 to 679 (FTAA…SRIW), 681 to 701 (GLAV…GIAS), and 740 to 760 (IQVC…VYPF).

The protein belongs to the ThrE exporter (TC 2.A.79) family.

It localises to the membrane. This Saccharomyces cerevisiae (strain YJM789) (Baker's yeast) protein is Pheromone-regulated membrane protein 10 (PRM10).